A 246-amino-acid chain; its full sequence is Isoprenyl transferase 1 (246 aa).

Residue aspartate 19 is part of the active site. Aspartate 19 lines the Mg(2+) pocket. Substrate-binding positions include 20 to 23 (GNGR), tryptophan 24, arginine 32, histidine 36, and 64 to 66 (STD). Residue asparagine 67 is the Proton acceptor of the active site. Residues tryptophan 68, arginine 70, arginine 180, and 186–188 (RLS) contribute to the substrate site. A Mg(2+)-binding site is contributed by glutamate 199.

This sequence belongs to the UPP synthase family. In terms of assembly, homodimer. Mg(2+) serves as cofactor.

Functionally, catalyzes the condensation of isopentenyl diphosphate (IPP) with allylic pyrophosphates generating different type of terpenoids. This chain is Isoprenyl transferase 1, found in Bradyrhizobium diazoefficiens (strain JCM 10833 / BCRC 13528 / IAM 13628 / NBRC 14792 / USDA 110).